Reading from the N-terminus, the 99-residue chain is Protein RnfH (99 aa).

The protein belongs to the UPF0125 (RnfH) family.

In Tolumonas auensis (strain DSM 9187 / NBRC 110442 / TA 4), this protein is Protein RnfH.